The following is a 752-amino-acid chain: Double zinc ribbon and ankyrin repeat-containing protein 1 (752 aa).

A phosphoserine mark is found at S160 and S182. A disordered region spans residues I164 to H187. Positions R174–P183 are enriched in polar residues. 2 DZANK-type zinc fingers span residues C211–C270 and C339–G387. 2 ANK repeats span residues E605–C636 and D640–Q669.

As to quaternary structure, interacts with NINL isoform 2. Associates with DYNC1H1 and multiple dynein intermediate and light chains as well as actin-binding proteins.

Its subcellular location is the cytoplasm. The protein localises to the cytoskeleton. It localises to the microtubule organizing center. It is found in the centrosome. The protein resides in the cilium basal body. In terms of biological role, involved in vesicle transport in photoreceptor cells. The chain is Double zinc ribbon and ankyrin repeat-containing protein 1 from Homo sapiens (Human).